The sequence spans 242 residues: MASRQAYKRLSKEYKMMTENPPPYIVAAPKEDNILVWHYVITGPPETPYEDGQYHGTLVFPNDYPFNPPAIRMLTPNGRFRENTRLCLSMSDYHPDTWNPSWSVATILTGLLSFMTTDESSIGTMESTDSTKRKYAAKSKEHNATRSPIFCQIFPELAEQNRRDIEEAKKRKDETVVEDEHPFKQEQVVSLEEINDPEDRIRAQMLQQPAGNGTTSNSIGRSLLFVLFSLAALLVAVCYTRV.

Residues 1–217 lie on the Cytoplasmic side of the membrane; sequence MASRQAYKRL…QPAGNGTTSN (217 aa). The 159-residue stretch at 5 to 163 folds into the UBC core domain; sequence QAYKRLSKEY…FPELAEQNRR (159 aa). C87 (glycyl thioester intermediate) is an active-site residue. Residues 218–240 traverse the membrane as a helical segment; it reads SIGRSLLFVLFSLAALLVAVCYT.

This sequence belongs to the ubiquitin-conjugating enzyme family.

Its subcellular location is the endoplasmic reticulum membrane. It catalyses the reaction S-ubiquitinyl-[E1 ubiquitin-activating enzyme]-L-cysteine + [E2 ubiquitin-conjugating enzyme]-L-cysteine = [E1 ubiquitin-activating enzyme]-L-cysteine + S-ubiquitinyl-[E2 ubiquitin-conjugating enzyme]-L-cysteine.. It functions in the pathway protein modification; protein ubiquitination. Its function is as follows. Catalyzes the covalent attachment of ubiquitin to other proteins. Functions in degradation of misfolded or regulated proteins localized in the endoplasmic reticulum (ER) lumen or membrane via the ubiquitin-proteasome system. Cognate E2 conjugating enzyme for the DOA10 ubiquitin ligase complex, which is part of the ERAD-C pathway responsible for the rapid degradation of membrane proteins with misfolded cytoplasmic domains. This is Ubiquitin-conjugating enzyme E2 6 (UBC6) from Eremothecium gossypii (strain ATCC 10895 / CBS 109.51 / FGSC 9923 / NRRL Y-1056) (Yeast).